Reading from the N-terminus, the 135-residue chain is Phosphoribosyl-AMP cyclohydrolase (135 aa).

Aspartate 89 provides a ligand contact to Mg(2+). Cysteine 90 serves as a coordination point for Zn(2+). The Mg(2+) site is built by aspartate 91 and aspartate 93. Zn(2+)-binding residues include cysteine 106 and cysteine 113.

It belongs to the PRA-CH family. In terms of assembly, homodimer. It depends on Mg(2+) as a cofactor. Requires Zn(2+) as cofactor.

Its subcellular location is the cytoplasm. The enzyme catalyses 1-(5-phospho-beta-D-ribosyl)-5'-AMP + H2O = 1-(5-phospho-beta-D-ribosyl)-5-[(5-phospho-beta-D-ribosylamino)methylideneamino]imidazole-4-carboxamide. The protein operates within amino-acid biosynthesis; L-histidine biosynthesis; L-histidine from 5-phospho-alpha-D-ribose 1-diphosphate: step 3/9. Its function is as follows. Catalyzes the hydrolysis of the adenine ring of phosphoribosyl-AMP. This Bifidobacterium adolescentis (strain ATCC 15703 / DSM 20083 / NCTC 11814 / E194a) protein is Phosphoribosyl-AMP cyclohydrolase.